Reading from the N-terminus, the 507-residue chain is MAAMMASITSELLFFLPYILLALLTFYTTTVAKCHRWRRTEEKRRCPNLPPGAIGWPFIGETFGYLRAHPATSVGRFMEEHIARYGKIYRSSLFGDRTVVSADAGLNRYILQNEGKLFECSYPRSIGGILGKWSMLVLVGDPHREMRAISLNFLSSLRLRAVLLPEVERHTLLVLRHWPSASPAVFSAQHEAKKFTFNLMAKNIMSMDPGEEETERLRLEYITFMKGVVSAPLNFPGTAYWKALKSRATILGVIERKMEDRLQKMNKEDSSIEEDDLLGWAMKQSNLSKEQILDLLLSLLFAGHETSSMALALAIFFLEGCPKAVQELREEHLEIARRQRLRGECKLSWEDYKDMVFTQCVINETLRLGNVVRFLHRKVIRDVHYKGYDIPSGWKILPVLAAVHLDSSLYEDPSRFNPWRWKGNASGVAQSGNFMPYGGGTRLCAGSELAKLEMAIFLHHLVLNFRWELAEPDQAFVYPFVDFPKGLPIRVHRIAQEEEKSVLTVDI.

Residues 12–32 traverse the membrane as a helical segment; it reads LLFFLPYILLALLTFYTTTVA. A heme-binding site is contributed by Cys-444.

Belongs to the cytochrome P450 family. The cofactor is heme.

The protein resides in the membrane. The enzyme catalyses a C27-steroid + reduced [NADPH--hemoprotein reductase] + O2 = a (22S)-22-hydroxy C27-steroid + oxidized [NADPH--hemoprotein reductase] + H2O + H(+). It carries out the reaction a C28-steroid + reduced [NADPH--hemoprotein reductase] + O2 = a (22S)-22-hydroxy C28-steroid + oxidized [NADPH--hemoprotein reductase] + H2O + H(+). It catalyses the reaction campesterol + reduced [NADPH--hemoprotein reductase] + O2 = (22S)-22-hydroxycampesterol + oxidized [NADPH--hemoprotein reductase] + H2O + H(+). The catalysed reaction is campestanol + reduced [NADPH--hemoprotein reductase] + O2 = 6-deoxycathasterone + oxidized [NADPH--hemoprotein reductase] + H2O + H(+). It functions in the pathway plant hormone biosynthesis; brassinosteroid biosynthesis. Its function is as follows. Involved in reduction steps of the biosynthesis of plant campesterol-derivative steroids, ending to castasterone (CS) but missing brassinolide (BL). Catalyzes the conversion of campesterol (CR) to (22S)-22-hydroxycampesterol (22-OHCR, 22-hydroxyCR) and of campestanol (CN) to 6-deoxycathasterone (6-deoxoCT). This Brachypodium distachyon (Purple false brome) protein is Steroid (22S)-hydroxylase.